We begin with the raw amino-acid sequence, 300 residues long: DNA repair protein RecO (300 aa).

It belongs to the RecO family.

Involved in DNA repair and RecF pathway recombination. In Nostoc punctiforme (strain ATCC 29133 / PCC 73102), this protein is DNA repair protein RecO.